A 238-amino-acid chain; its full sequence is MEPYEAQKMMAEIRGSKETAAQPLPLYDTPYEPEDEGASPEGEGTPWPRESRLPEDDERPPEEYDQPWEWKKERISKAFAAQFEGSENCLSPGREEKGRLPPRLSAGNPKSAKPLGMEPSSPLGEWTDPALPLENQVWYHGAISRTDAENLLRLCKEASYLVRNSETSKNDFSLSLKSSQGFMHMKLSRTKEHKYVLGQNSPPFSSVPEIVHHYASRKLPIKGAEHMSLLYPVAIRTL.

Disordered regions lie at residues 1–70 and 85–121; these read MEPY…PWEW and GSEN…EPSS. S39 bears the Phosphoserine mark. The segment covering 55–66 has biased composition (acidic residues); sequence EDDERPPEEYDQ. Position 64 is a phosphotyrosine (Y64). The SH2 domain maps to 138 to 233; that stretch reads WYHGAISRTD…AEHMSLLYPV (96 aa).

As to quaternary structure, interacts with phosphorylated 'Tyr-720' of PDGFRA via its SH2 domain. May become phosphorylated upon binding to PDGFRA.

Adapter protein which may play a role in the regulation of apoptosis in response to PDGF. This chain is SH2 domain-containing adapter protein F, found in Mus musculus (Mouse).